A 302-amino-acid chain; its full sequence is Coenzyme PQQ synthesis protein B (302 aa).

This sequence belongs to the PqqB family.

The protein operates within cofactor biosynthesis; pyrroloquinoline quinone biosynthesis. May be involved in the transport of PQQ or its precursor to the periplasm. The protein is Coenzyme PQQ synthesis protein B of Azotobacter vinelandii (strain DJ / ATCC BAA-1303).